Consider the following 704-residue polypeptide: Elongation factor G (704 aa).

Positions 8–290 (EKYRNIGICA…GVVRYLPAPN (283 aa)) constitute a tr-type G domain. Residues 17–24 (AHVDAGKT), 88–92 (DTPGH), and 142–145 (NKMD) each bind GTP.

Belongs to the TRAFAC class translation factor GTPase superfamily. Classic translation factor GTPase family. EF-G/EF-2 subfamily.

Its subcellular location is the cytoplasm. Its function is as follows. Catalyzes the GTP-dependent ribosomal translocation step during translation elongation. During this step, the ribosome changes from the pre-translocational (PRE) to the post-translocational (POST) state as the newly formed A-site-bound peptidyl-tRNA and P-site-bound deacylated tRNA move to the P and E sites, respectively. Catalyzes the coordinated movement of the two tRNA molecules, the mRNA and conformational changes in the ribosome. This chain is Elongation factor G, found in Francisella tularensis subsp. tularensis (strain FSC 198).